Reading from the N-terminus, the 301-residue chain is 4-hydroxybenzoate octaprenyltransferase (301 aa).

The next 7 helical transmembrane spans lie at 34 to 54 (IGSL…AGGL), 57 to 77 (LWTL…GCVI), 108 to 128 (LWVF…LNWL), 163 to 183 (WGIP…AWLL), 222 to 242 (DLIA…LVGL), 248 to 268 (IAYW…FHIA), and 280 to 300 (FLHN…SLAL).

The protein belongs to the UbiA prenyltransferase family. It depends on Mg(2+) as a cofactor.

The protein resides in the cell inner membrane. The enzyme catalyses all-trans-octaprenyl diphosphate + 4-hydroxybenzoate = 4-hydroxy-3-(all-trans-octaprenyl)benzoate + diphosphate. It functions in the pathway cofactor biosynthesis; ubiquinone biosynthesis. In terms of biological role, catalyzes the prenylation of para-hydroxybenzoate (PHB) with an all-trans polyprenyl group. Mediates the second step in the final reaction sequence of ubiquinone-8 (UQ-8) biosynthesis, which is the condensation of the polyisoprenoid side chain with PHB, generating the first membrane-bound Q intermediate 3-octaprenyl-4-hydroxybenzoate. The sequence is that of 4-hydroxybenzoate octaprenyltransferase from Xanthomonas campestris pv. campestris (strain 8004).